A 288-amino-acid polypeptide reads, in one-letter code: Syntaxin-1A (288 aa).

Residues 1–13 are compositionally biased toward basic and acidic residues; the sequence is MKDRTQELRTAKD. Positions 1–20 are disordered; the sequence is MKDRTQELRTAKDSDDDDDV. The Cytoplasmic segment spans residues 1–265; the sequence is MKDRTQELRT…KYQSKARRKK (265 aa). A phosphoserine mark is found at serine 14, serine 64, and serine 95. Residues 68 to 109 are a coiled coil; it reads DEKTKEELEELMSDIKKTANKVRSKLKSIEQSIEQEEGLNRS. At serine 188 the chain carries Phosphoserine; by DAPK1. One can recognise a t-SNARE coiled-coil homology domain in the interval 192 to 254; it reads LSEIETRHSE…ERAVSDTKKA (63 aa). Residues lysine 252, lysine 253, and lysine 256 each participate in a glycyl lysine isopeptide (Lys-Gly) (interchain with G-Cter in SUMO) cross-link. The chain crosses the membrane as a helical; Anchor for type IV membrane protein span at residues 266 to 288; the sequence is IMIIICCVILGIIIASTIGGIFG.

It belongs to the syntaxin family. In terms of assembly, part of the SNARE core complex containing SNAP25, VAMP2 and STX1A; this complex constitutes the basic catalytic machinery of the complex neurotransmitter release apparatus. The SNARE complex interacts with CPLX1. Interacts with STXBP1. The interaction with STXBP1 promotes assembly of the SNARE complex. Interacts (via C-terminus) with KCNB1 (via C-terminus); the interaction increases in a calcium-dependent manner and induces a pore-independent enhancement of exocytosis in neuroendocrine cells, chromaffin cells, pancreatic beta cells and from the soma of dorsal root ganglia (DRG) neurons. Interacts with SYTL4. Interacts with STXBP6. Interacts with PLCL1 (via C2 domain). Interacts with OTOF. Interacts with LGI3. Interacts (via the H3 domain) with SLC6A4 (via the N-terminus); this interaction regulates SLC4A6 channel conductance in thalamocortical neurons. Interacts with SYT6 and SYT8; the interaction is Ca(2+)-dependent. Interacts with VAMP8. Interacts with SNAP23. Interacts with VAPA and SYBU. Interacts with PRRT2. Interacts with SEPT8. Interacts with STXBP5L. Interacts with synaptotagmin-1/SYT1. Interacts with SEPTIN5; in the cerebellar cortex. Interacts with SEPTIN4; in the striatum. Phosphorylated by CK2. Phosphorylation at Ser-188 by DAPK1 significantly decreases its interaction with STXBP1. In terms of processing, (Microbial infection) Targeted and hydrolyzed by C.botulinum neurotoxin type C (BoNT/C), which hydrolyzes the 253-Lys-|-Ala-254 bond. Cleavage inhibits neurotransmitter release. Post-translationally, phosphorylated by CK2. Phosphorylation at Ser-188 by DAPK1 significantly decreases its interaction with STXBP1. Sumoylated, sumoylation is required for regulation of synaptic vesicle endocytosis. In terms of tissue distribution, expressed predominantly in cerebral cortex, hippocampus, cerebellum, adrenal medulla and retina with weak expression detected in non-neuronal tissues.

It localises to the cytoplasmic vesicle. The protein localises to the secretory vesicle. It is found in the synaptic vesicle membrane. The protein resides in the cell membrane. Its subcellular location is the synapse. It localises to the synaptosome. Plays an essential role in hormone and neurotransmitter calcium-dependent exocytosis and endocytosis. Part of the SNARE (Soluble NSF Attachment Receptor) complex composed of SNAP25, STX1A and VAMP2 which mediates the fusion of synaptic vesicles with the presynaptic plasma membrane. STX1A and SNAP25 are localized on the plasma membrane while VAMP2 resides in synaptic vesicles. The pairing of the three SNAREs from the N-terminal SNARE motifs to the C-terminal anchors leads to the formation of the SNARE complex, which brings membranes into close proximity and results in final fusion. Participates in the calcium-dependent regulation of acrosomal exocytosis in sperm. Also plays an important role in the exocytosis of hormones such as insulin or glucagon-like peptide 1 (GLP-1). The polypeptide is Syntaxin-1A (Stx1a) (Rattus norvegicus (Rat)).